The chain runs to 302 residues: UDP-3-O-acyl-N-acetylglucosamine deacetylase (302 aa).

The Zn(2+) site is built by H78, H237, and D241. H264 serves as the catalytic Proton donor.

It belongs to the LpxC family. It depends on Zn(2+) as a cofactor.

The enzyme catalyses a UDP-3-O-[(3R)-3-hydroxyacyl]-N-acetyl-alpha-D-glucosamine + H2O = a UDP-3-O-[(3R)-3-hydroxyacyl]-alpha-D-glucosamine + acetate. The protein operates within glycolipid biosynthesis; lipid IV(A) biosynthesis; lipid IV(A) from (3R)-3-hydroxytetradecanoyl-[acyl-carrier-protein] and UDP-N-acetyl-alpha-D-glucosamine: step 2/6. Catalyzes the hydrolysis of UDP-3-O-myristoyl-N-acetylglucosamine to form UDP-3-O-myristoylglucosamine and acetate, the committed step in lipid A biosynthesis. The protein is UDP-3-O-acyl-N-acetylglucosamine deacetylase of Hahella chejuensis (strain KCTC 2396).